A 460-amino-acid polypeptide reads, in one-letter code: MKISFIEPAILLNAFAMTLTIPLTAQYVYRRIWEETGNYTFASNSNGSECDQNKSSSIFAFREEVQKKASLFNLQVEMSALIPGLVSTFMLLASSDNHGRKLPMVLSSLGSLGTNTWLCMMSYFDLPLQLLIASTFIGALFGNYTTFWGACFAYIVDQQKEYKHRIIRIAILDFMLGVVTGLTGLSSGYFIRELGFVWSYFITAMVLIVNLAYILFFLNDPIKESSSQIVTMSCIESLKDLFYRTYMLFKNGSSKRQALLCLLIFTLVIYFFVIIGISPIFTLYELGPPLCWNEVYIGYGSALGSVSFLSSFLGIWLFSYCLKDIHIAYIGIFTTMVGMTLAAFTRTTLMMFLVRIPFIFTIMPLSVLRSMLSKVVHSTEQGALFACIAFLETLAGVTSTSAYSGIYSATVAWYPGFIFLLSAGLLVLPAISLCCVKSIGWEEGSYTLLVHEEPSEHTSD.

The N-terminal stretch at 1–25 (MKISFIEPAILLNAFAMTLTIPLTA) is a signal peptide. At 26–73 (QYVYRRIWEETGNYTFASNSNGSECDQNKSSSIFAFREEVQKKASLFN) the chain is on the extracellular side. Residues N38, N46, and N53 are each glycosylated (N-linked (GlcNAc...) asparagine). The chain crosses the membrane as a helical span at residues 74–94 (LQVEMSALIPGLVSTFMLLAS). Over 95–111 (SDNHGRKLPMVLSSLGS) the chain is Cytoplasmic. A helical transmembrane segment spans residues 112–132 (LGTNTWLCMMSYFDLPLQLLI). At 133 to 135 (AST) the chain is on the extracellular side. A helical transmembrane segment spans residues 136–156 (FIGALFGNYTTFWGACFAYIV). The Cytoplasmic portion of the chain corresponds to 157 to 170 (DQQKEYKHRIIRIA). Residues 171–191 (ILDFMLGVVTGLTGLSSGYFI) form a helical membrane-spanning segment. Over 192 to 195 (RELG) the chain is Extracellular. A helical membrane pass occupies residues 196 to 216 (FVWSYFITAMVLIVNLAYILF). Topologically, residues 217 to 257 (FLNDPIKESSSQIVTMSCIESLKDLFYRTYMLFKNGSSKRQ) are cytoplasmic. A helical membrane pass occupies residues 258-278 (ALLCLLIFTLVIYFFVIIGIS). The Extracellular portion of the chain corresponds to 279 to 301 (PIFTLYELGPPLCWNEVYIGYGS). Residues 302-322 (ALGSVSFLSSFLGIWLFSYCL) traverse the membrane as a helical segment. Residues 323 to 324 (KD) are Cytoplasmic-facing. The chain crosses the membrane as a helical span at residues 325–345 (IHIAYIGIFTTMVGMTLAAFT). At 346–347 (RT) the chain is on the extracellular side. Residues 348 to 368 (TLMMFLVRIPFIFTIMPLSVL) form a helical membrane-spanning segment. At 369-381 (RSMLSKVVHSTEQ) the chain is on the cytoplasmic side. The helical transmembrane segment at 382–402 (GALFACIAFLETLAGVTSTSA) threads the bilayer. Topologically, residues 403–410 (YSGIYSAT) are extracellular. Residues 411–431 (VAWYPGFIFLLSAGLLVLPAI) form a helical membrane-spanning segment. Residues 432–460 (SLCCVKSIGWEEGSYTLLVHEEPSEHTSD) lie on the Cytoplasmic side of the membrane. The short motif at 446–449 (YTLL) is the Tyrosine-based lysosomal-sorting motif element.

This sequence belongs to the major facilitator superfamily. SLC46A family. As to expression, expressed in liver, kidney, small intestine and colon.

Its subcellular location is the lysosome membrane. The enzyme catalyses estrone 3-sulfate(out) + n H(+)(out) = estrone 3-sulfate(in) + n H(+)(in). It carries out the reaction 25-hydroxyvitamin D3 sulfate(out) + n H(+)(out) = 25-hydroxyvitamin D3 sulfate(in) + n H(+)(in). The catalysed reaction is cholate(out) + n H(+)(out) = cholate(in) + n H(+)(in). It catalyses the reaction glycocholate(out) + n H(+)(out) = glycocholate(in) + n H(+)(in). The enzyme catalyses taurocholate(out) + n H(+)(out) = taurocholate(in) + n H(+)(in). It carries out the reaction dehydroepiandrosterone 3-sulfate(out) + n H(+)(out) = dehydroepiandrosterone 3-sulfate(in) + n H(+)(in). The catalysed reaction is N-acetyl-D-muramoyl-L-alanyl-D-isoglutamine(out) + n H(+)(out) = N-acetyl-D-muramoyl-L-alanyl-D-isoglutamine(in) + n H(+)(in). It catalyses the reaction 2',3'-cGAMP(out) + n H(+)(out) = 2',3'-cGAMP(in) + n H(+)(in). Functionally, lysosomal proton-coupled steroid conjugate and bile acid transporter. Preferentially recognizes lipophilic steroid conjugates or bile acis as endogenous substrates and seems to mediate escape from lysosomes to the cytoplasm. Modulates hepatic cytosolic copper homeostasis, maybe acting as a lysosomal copper transporter and sequestering copper ions in the lysosome. Delivers pathogen-associated molecular patterns to cytosolic pattern recognition receptors as part of the innate immune response to microbes. Selectively transports bacterial muramyl dipeptide (MDP) into the cytosol for recognition by NOD2, triggering inflammatory responses. Likely acts as a redundant importer of cyclic GMP-AMP dinucleotides (cGAMPs) in monocyte and macrophage cell lineages. The transport mechanism, its electrogenicity and stoichiometry remain to be elucidated. The protein is Lysosomal proton-coupled steroid conjugate and bile acid symporter SLC46A3 (Slc46a3) of Mus musculus (Mouse).